We begin with the raw amino-acid sequence, 196 residues long: ATP-dependent Clp protease proteolytic subunit (196 aa).

S101 functions as the Nucleophile in the catalytic mechanism. Residue H126 is part of the active site.

This sequence belongs to the peptidase S14 family. As to quaternary structure, component of the chloroplastic Clp protease core complex.

The protein localises to the plastid. The protein resides in the chloroplast stroma. It carries out the reaction Hydrolysis of proteins to small peptides in the presence of ATP and magnesium. alpha-casein is the usual test substrate. In the absence of ATP, only oligopeptides shorter than five residues are hydrolyzed (such as succinyl-Leu-Tyr-|-NHMec, and Leu-Tyr-Leu-|-Tyr-Trp, in which cleavage of the -Tyr-|-Leu- and -Tyr-|-Trp bonds also occurs).. Functionally, cleaves peptides in various proteins in a process that requires ATP hydrolysis. Has a chymotrypsin-like activity. Plays a major role in the degradation of misfolded proteins. The polypeptide is ATP-dependent Clp protease proteolytic subunit (Lobularia maritima (Sweet alyssum)).